A 136-amino-acid polypeptide reads, in one-letter code: DNA-directed RNA polymerase subunit omega (136 aa).

This sequence belongs to the RNA polymerase subunit omega family. The RNAP catalytic core consists of 2 alpha, 1 beta, 1 beta' and 1 omega subunit. When a sigma factor is associated with the core the holoenzyme is formed, which can initiate transcription.

It catalyses the reaction RNA(n) + a ribonucleoside 5'-triphosphate = RNA(n+1) + diphosphate. Its function is as follows. Promotes RNA polymerase assembly. Latches the N- and C-terminal regions of the beta' subunit thereby facilitating its interaction with the beta and alpha subunits. This chain is DNA-directed RNA polymerase subunit omega, found in Methylorubrum extorquens (strain CM4 / NCIMB 13688) (Methylobacterium extorquens).